The following is a 351-amino-acid chain: Bifunctional UDP-glucose 4-epimerase and UDP-xylose 4-epimerase 3 (351 aa).

8-39 (NILVTGGAGFIGTHTVVQLLNQGFKVTIIDNL) provides a ligand contact to NAD(+). S134 contacts substrate. The active-site Proton acceptor is the Y158.

Belongs to the NAD(P)-dependent epimerase/dehydratase family. In terms of assembly, homodimer. Heterodimer. Requires NAD(+) as cofactor. In terms of tissue distribution, ubiquitous.

It carries out the reaction UDP-alpha-D-glucose = UDP-alpha-D-galactose. It catalyses the reaction UDP-beta-L-arabinopyranose = UDP-alpha-D-xylose. The protein operates within carbohydrate metabolism; galactose metabolism. It functions in the pathway nucleotide-sugar biosynthesis; UDP-L-arabinose biosynthesis; UDP-L-arabinose from UDP-alpha-D-xylose: step 1/1. It participates in cell wall biogenesis; cell wall polysaccharide biosynthesis. With respect to regulation, strongly inhibited by UDP. Its function is as follows. Catalyzes the interconversion between UDP-glucose and UDP-galactose and the interconversion between UDP-arabinose and UDP-xylose. Cooperates with UGE2 in pollen development. May preferentially act in the UDP-galactose to UDP-glucose direction, therefore displaying a role in carbohydrate catabolism. This Arabidopsis thaliana (Mouse-ear cress) protein is Bifunctional UDP-glucose 4-epimerase and UDP-xylose 4-epimerase 3 (UGE3).